Reading from the N-terminus, the 769-residue chain is Neprilysin-21 (769 aa).

The Cytoplasmic portion of the chain corresponds to 1–26; it reads MKPENGAATWHPAKRSCLGRLTTLET. A helical; Signal-anchor for type II membrane protein transmembrane segment spans residues 27–47; sequence LLLVFLGLLITALLSVLFLWL. Residues 48 to 769 are Extracellular-facing; the sequence is WVLDGYKTFT…MNPERKCQVW (722 aa). Asn-69 carries N-linked (GlcNAc...) asparagine glycosylation. Residues 85 to 769 form the Peptidase M13 domain; it reads VCTSRECVRL…MNPERKCQVW (685 aa). Disulfide bonds link Cys-86/Cys-91, Cys-109/Cys-754, Cys-117/Cys-714, Cys-173/Cys-428, and Cys-638/Cys-766. 7 N-linked (GlcNAc...) asparagine glycosylation sites follow: Asn-221, Asn-240, Asn-272, Asn-307, Asn-356, Asn-412, and Asn-506. His-601 contributes to the Zn(2+) binding site. The active site involves Glu-602. 2 residues coordinate Zn(2+): His-605 and Glu-663. Asp-667 acts as the Proton donor in catalysis. N-linked (GlcNAc...) asparagine glycans are attached at residues Asn-684 and Asn-698.

Belongs to the peptidase M13 family. Zn(2+) is required as a cofactor.

The protein resides in the cell membrane. Functionally, probable cell surface protease. This Caenorhabditis elegans protein is Neprilysin-21 (nep-21).